Reading from the N-terminus, the 749-residue chain is Cytosolic phospholipase A2 (749 aa).

Residues methionine 1–serine 178 form a phospholipid binding region. Serine 2 is subject to Phosphoserine. Residues proline 6 to phenylalanine 122 form the C2 domain. Residues aspartate 40, threonine 41, aspartate 43, asparagine 65, aspartate 93, alanine 94, and asparagine 95 each coordinate Ca(2+). One can recognise a PLA2c domain in the interval serine 140–asparagine 740. Serine 228 functions as the Nucleophile in the catalytic mechanism. A Phosphothreonine modification is found at threonine 268. Residues lysine 427 to tyrosine 456 are disordered. Phosphoserine is present on residues serine 434, serine 435, and serine 437. Phosphoserine; by MAPK is present on serine 505. Phosphoserine is present on serine 515. Lysine 541 participates in a covalent cross-link: Glycyl lysine isopeptide (Lys-Gly) (interchain with G-Cter in SUMO2). Aspartate 549 acts as the Proton acceptor in catalysis. Residue lysine 606 forms a Glycyl lysine isopeptide (Lys-Gly) (interchain with G-Cter in SUMO2) linkage. Residues serine 727 and serine 729 each carry the phosphoserine modification.

In terms of assembly, interacts with KAT5. In terms of processing, phosphorylated at both Ser-505 and Ser-727 in response to mitogenic stimuli.

The protein localises to the cytoplasm. It localises to the golgi apparatus membrane. It is found in the nucleus envelope. The catalysed reaction is a 1,2-diacyl-sn-glycero-3-phosphocholine + H2O = a 1-acyl-sn-glycero-3-phosphocholine + a fatty acid + H(+). It carries out the reaction a 1-O-alkyl-2-acyl-sn-glycero-3-phosphocholine + H2O = a 1-O-alkyl-sn-glycero-3-phosphocholine + a fatty acid + H(+). The enzyme catalyses a 1-acyl-sn-glycero-3-phosphocholine + H2O = sn-glycerol 3-phosphocholine + a fatty acid + H(+). It catalyses the reaction 1-hexadecanoyl-2-(5Z,8Z,11Z,14Z-eicosatetraenoyl)-sn-glycero-3-phosphocholine + H2O = 1-hexadecanoyl-sn-glycero-3-phosphocholine + (5Z,8Z,11Z,14Z)-eicosatetraenoate + H(+). The catalysed reaction is 1,2-di-(5Z,8Z,11Z,14Z-eicosatetraenoyl)-sn-glycero-3-phosphocholine + H2O = 1-(5Z,8Z,11Z,14Z-eicosatetraenoyl)-sn-glycero-3-phosphocholine + (5Z,8Z,11Z,14Z)-eicosatetraenoate + H(+). It carries out the reaction 1-octadecanoyl-2-(5Z,8Z,11Z,14Z-eicosatetraenoyl)-sn-glycero-3-phosphocholine + H2O = 1-octadecanoyl-sn-glycero-3-phosphocholine + (5Z,8Z,11Z,14Z)-eicosatetraenoate + H(+). The enzyme catalyses 1-hexadecanoyl-2-(9Z,12Z-octadecadienoyl)-sn-glycero-3-phosphocholine + H2O = (9Z,12Z)-octadecadienoate + 1-hexadecanoyl-sn-glycero-3-phosphocholine + H(+). It catalyses the reaction 1-octadecanoyl-2-(9Z,12Z,15Z-octadecatrienoyl)-sn-glycero-3-phosphocholine + H2O = (9Z,12Z,15Z)-octadecatrienoate + 1-octadecanoyl-sn-glycero-3-phosphocholine + H(+). The catalysed reaction is 1-(5Z,8Z,11Z,14Z-eicosatetraenoyl)-2-hexadecanoyl-sn-glycero-3-phosphocholine + H2O = 1-(5Z,8Z,11Z,14Z-eicosatetraenoyl)-sn-glycero-3-phosphocholine + hexadecanoate + H(+). It carries out the reaction 1-O-hexadecyl-2-(5Z,8Z,11Z,14Z)-eicosatetraenoyl-sn-glycero-3-phosphocholine + H2O = 1-O-hexadecyl-sn-glycero-3-phosphocholine + (5Z,8Z,11Z,14Z)-eicosatetraenoate + H(+). The enzyme catalyses 1,2-di-(9Z-octadecenoyl)-sn-glycero-3-phospho-(1'-sn-glycerol) + H2O = 1-(9Z-octadecenoyl)-sn-glycero-3-phospho-(1'-sn-glycerol) + (9Z)-octadecenoate + H(+). It catalyses the reaction 1-octadecanoyl-2-(5Z,8Z,11Z,14Z-eicosatetraenoyl)-sn-glycero-3-phosphate + H2O = 1-octadecanoyl-sn-glycero-3-phosphate + (5Z,8Z,11Z,14Z)-eicosatetraenoate + H(+). The catalysed reaction is 1-hexadecanoyl-sn-glycero-3-phosphocholine + H2O = sn-glycerol 3-phosphocholine + hexadecanoate + H(+). It carries out the reaction 2-(prostaglandin E2)-sn-glycero-3-phosphoethanolamine + H2O = sn-glycero-3-phosphoethanolamine + prostaglandin E2 + H(+). The enzyme catalyses 2-[(15S)-hydroxy-(5Z,8Z,11Z,13E)-eicosatetraenoyl]-sn-glycero-3-phosphocholine + H2O = (15S)-hydroxy-(5Z,8Z,11Z,13E)-eicosatetraenoate + sn-glycerol 3-phosphocholine + H(+). It catalyses the reaction 2-[(15R)-hydroxy-(5Z,8Z,11Z,13E)-eicosatetraenoyl]-sn-glycero-3-phosphocholine + H2O = (15R)-hydroxy-(5Z,8Z,11Z,13E)-eicosatetraenoate + sn-glycerol 3-phosphocholine + H(+). The catalysed reaction is 2-(prostaglandin E2)-sn-glycero-3-phosphocholine + H2O = prostaglandin E2 + sn-glycerol 3-phosphocholine + H(+). It carries out the reaction 2-[(11R)-hydroxy-(5Z,8Z,12E,14Z)-eicosatetraenoyl]-sn-glycero-3-phosphocholine + H2O = (11R)-hydroxy-(5Z,8Z,12E,14Z)-eicosatetraenoate + sn-glycerol 3-phosphocholine + H(+). The enzyme catalyses 1-(5Z,8Z,11Z,14Z-eicosatetraenoyl)-2-O-hexadecyl-sn-glycero-3-phosphocholine + H2O = 2-O-hexadecyl-sn-glycero-3-phosphocholine + (5Z,8Z,11Z,14Z)-eicosatetraenoate + H(+). It catalyses the reaction 1-octadecanoyl-2-(5Z,8Z,11Z,14Z-eicosatetraenoyl)-sn-glycero-3-phosphocholine + glycerol = 1-(5Z,8Z,11Z,14Z-eicosatetraenoyl)-glycerol + 1-octadecanoyl-sn-glycero-3-phosphocholine. The catalysed reaction is 1-octadecanoyl-2-(9Z,12Z,15Z-octadecatrienoyl)-sn-glycero-3-phosphocholine + glycerol = 1-(9Z,12Z,15Z-octadecatrienoyl)-glycerol + 1-octadecanoyl-sn-glycero-3-phosphocholine. The protein operates within membrane lipid metabolism; glycerophospholipid metabolism. Its pathway is lipid metabolism; arachidonate metabolism. It participates in lipid metabolism; prostaglandin biosynthesis. It functions in the pathway lipid metabolism; leukotriene B4 biosynthesis. Activated by cytosolic calcium, which is necessary for binding to membrane lipids. Activated by phosphorylation in response to mitogenic stimuli. Functionally, has primarily calcium-dependent phospholipase and lysophospholipase activities, with a major role in membrane lipid remodeling and biosynthesis of lipid mediators of the inflammatory response. Plays an important role in embryo implantation and parturition through its ability to trigger prostanoid production. Preferentially hydrolyzes the ester bond of the fatty acyl group attached at sn-2 position of phospholipids (phospholipase A2 activity). Selectively hydrolyzes sn-2 arachidonoyl group from membrane phospholipids, providing the precursor for eicosanoid biosynthesis via the cyclooxygenase pathway. In an alternative pathway of eicosanoid biosynthesis, hydrolyzes sn-2 fatty acyl chain of eicosanoid lysophopholipids to release free bioactive eicosanoids. Hydrolyzes the ester bond of the fatty acyl group attached at sn-1 position of phospholipids (phospholipase A1 activity) only if an ether linkage rather than an ester linkage is present at the sn-2 position. This hydrolysis is not stereospecific. Has calcium-independent phospholipase A2 and lysophospholipase activities in the presence of phosphoinositides. Has O-acyltransferase activity. Catalyzes the transfer of fatty acyl chains from phospholipids to a primary hydroxyl group of glycerol (sn-1 or sn-3), potentially contributing to monoacylglycerol synthesis. The chain is Cytosolic phospholipase A2 (PLA2G4A) from Equus caballus (Horse).